The chain runs to 108 residues: Large ribosomal subunit protein uL22 (108 aa).

This sequence belongs to the universal ribosomal protein uL22 family. As to quaternary structure, part of the 50S ribosomal subunit.

This protein binds specifically to 23S rRNA; its binding is stimulated by other ribosomal proteins, e.g. L4, L17, and L20. It is important during the early stages of 50S assembly. It makes multiple contacts with different domains of the 23S rRNA in the assembled 50S subunit and ribosome. In terms of biological role, the globular domain of the protein is located near the polypeptide exit tunnel on the outside of the subunit, while an extended beta-hairpin is found that lines the wall of the exit tunnel in the center of the 70S ribosome. This is Large ribosomal subunit protein uL22 from Nitratiruptor sp. (strain SB155-2).